The primary structure comprises 422 residues: uncharacterized protein (422 aa).

The N-terminal stretch at 1–23 (MLSLIPFTVCAFLALITSKGGSA) is a signal peptide.

In terms of tissue distribution, component of the acid-insoluble organic matrix of the aragonitic skeleton (at protein level).

It localises to the secreted. This is an uncharacterized protein from Acropora millepora (Staghorn coral).